A 275-amino-acid polypeptide reads, in one-letter code: MKIANFEVGNGKPFFLMSGPCVIESEQMAMDTAGYLAEVTRDLGINFVYKSSFDKANRSSINSFRGLGVDKGLEILAKVKKTYNVPVVTDVHEDTPFAEVAEVVDVLQTPAFLCRQTNFILEVCKQGKPVNIKKGQFLAPWDMQHVVTKAKSTGNEQIMVCERGVSFGYNNLVSDMRSLEIMKATGCPVVFDATHSVQLPGGQGSSSGGQREFVPVLSKAAMAVGIDGLFMETHPNPDEAKSDGPNSFPMYKIKEFLSLLKELDHLVKSQPKTEL.

It belongs to the KdsA family.

Its subcellular location is the cytoplasm. The catalysed reaction is D-arabinose 5-phosphate + phosphoenolpyruvate + H2O = 3-deoxy-alpha-D-manno-2-octulosonate-8-phosphate + phosphate. It participates in carbohydrate biosynthesis; 3-deoxy-D-manno-octulosonate biosynthesis; 3-deoxy-D-manno-octulosonate from D-ribulose 5-phosphate: step 2/3. Its pathway is bacterial outer membrane biogenesis; lipopolysaccharide biosynthesis. In Francisella tularensis subsp. novicida (strain U112), this protein is 2-dehydro-3-deoxyphosphooctonate aldolase.